The chain runs to 198 residues: Glycerol-3-phosphate acyltransferase (198 aa).

Helical transmembrane passes span 1–21 (MNLLILFFGYLFGSFPSGYLA), 53–73 (IIVFLLDVFKGVLSILLAKYL), 79–99 (WQVAIGLSTLIGHIWPVWLNW), 111–131 (IFLGLSWQVGLATLGVFIIMI), 136–156 (IVSLASVSASLALPLIMFLSF), and 158–178 (GSNISLPFLIVSLLAMLLVIW).

It belongs to the PlsY family. As to quaternary structure, probably interacts with PlsX.

Its subcellular location is the cell inner membrane. It carries out the reaction an acyl phosphate + sn-glycerol 3-phosphate = a 1-acyl-sn-glycero-3-phosphate + phosphate. It functions in the pathway lipid metabolism; phospholipid metabolism. Its function is as follows. Catalyzes the transfer of an acyl group from acyl-phosphate (acyl-PO(4)) to glycerol-3-phosphate (G3P) to form lysophosphatidic acid (LPA). This enzyme utilizes acyl-phosphate as fatty acyl donor, but not acyl-CoA or acyl-ACP. This Prochlorococcus marinus (strain NATL1A) protein is Glycerol-3-phosphate acyltransferase.